The primary structure comprises 171 residues: 3-hydroxydecanoyl-[acyl-carrier-protein] dehydratase (171 aa).

His-70 is a catalytic residue.

The protein belongs to the thioester dehydratase family. FabA subfamily. In terms of assembly, homodimer.

It localises to the cytoplasm. It carries out the reaction a (3R)-hydroxyacyl-[ACP] = a (2E)-enoyl-[ACP] + H2O. It catalyses the reaction (3R)-hydroxydecanoyl-[ACP] = (2E)-decenoyl-[ACP] + H2O. The enzyme catalyses (2E)-decenoyl-[ACP] = (3Z)-decenoyl-[ACP]. Its pathway is lipid metabolism; fatty acid biosynthesis. Its function is as follows. Necessary for the introduction of cis unsaturation into fatty acids. Catalyzes the dehydration of (3R)-3-hydroxydecanoyl-ACP to E-(2)-decenoyl-ACP and then its isomerization to Z-(3)-decenoyl-ACP. Can catalyze the dehydratase reaction for beta-hydroxyacyl-ACPs with saturated chain lengths up to 16:0, being most active on intermediate chain length. The polypeptide is 3-hydroxydecanoyl-[acyl-carrier-protein] dehydratase (Shewanella denitrificans (strain OS217 / ATCC BAA-1090 / DSM 15013)).